We begin with the raw amino-acid sequence, 481 residues long: Probable glycine dehydrogenase (decarboxylating) subunit 2 (481 aa).

Position 265 is an N6-(pyridoxal phosphate)lysine (K265).

The protein belongs to the GcvP family. C-terminal subunit subfamily. The glycine cleavage system is composed of four proteins: P, T, L and H. In this organism, the P 'protein' is a heterodimer of two subunits. It depends on pyridoxal 5'-phosphate as a cofactor.

It carries out the reaction N(6)-[(R)-lipoyl]-L-lysyl-[glycine-cleavage complex H protein] + glycine + H(+) = N(6)-[(R)-S(8)-aminomethyldihydrolipoyl]-L-lysyl-[glycine-cleavage complex H protein] + CO2. In terms of biological role, the glycine cleavage system catalyzes the degradation of glycine. The P protein binds the alpha-amino group of glycine through its pyridoxal phosphate cofactor; CO(2) is released and the remaining methylamine moiety is then transferred to the lipoamide cofactor of the H protein. This Thermosipho melanesiensis (strain DSM 12029 / CIP 104789 / BI429) protein is Probable glycine dehydrogenase (decarboxylating) subunit 2.